Reading from the N-terminus, the 458-residue chain is SLIT-ROBO Rho GTPase-activating protein 2B (458 aa).

One can recognise an F-BAR domain in the interval K22 to D324. The segment covering L181 to T203 has biased composition (basic and acidic residues). The segment at L181–R214 is disordered. The stretch at Q362–I400 forms a coiled coil.

As to quaternary structure, may interact with SRGAP2; formation of the heterodimer alters SRGAP2 function.

Its function is as follows. May regulate cell migration and differentiation through interaction with and inhibition of SRGAP2. In contrast to SRGAP2C, it is not able to induce long-lasting changes in synaptic density throughout adulthood. In Homo sapiens (Human), this protein is SLIT-ROBO Rho GTPase-activating protein 2B (SRGAP2B).